Here is a 227-residue protein sequence, read N- to C-terminus: MMIAIPGVLSGRTLDHVRTLVTEAEWVDGNATSGHQSALAKKNRQLPEDGDAAREAGGIILDALGATPLFIAAALPLKVFPPLFNLYGGGERFDTHVDNAIRMKRGTDFRIRSDLSATLFLNDPDSYDGGELVVEDTLGTHKVKLGAGDMILYPASSLHHVTPVTRGERLCSFFWIQSMVRDDGARRTLFDLDTAIQAVAADRGQDDPAIIRLTGVYHNLLRRWAEA.

The Fe2OG dioxygenase domain maps to 78-178 (KVFPPLFNLY…RLCSFFWIQS (101 aa)). H96, D98, and H159 together coordinate Fe cation. R169 lines the 2-oxoglutarate pocket.

It depends on Fe(2+) as a cofactor. L-ascorbate is required as a cofactor.

In Rhizorhabdus wittichii (strain DSM 6014 / CCUG 31198 / JCM 15750 / NBRC 105917 / EY 4224 / RW1) (Sphingomonas wittichii), this protein is PKHD-type hydroxylase Swit_4046.